Reading from the N-terminus, the 111-residue chain is Probable 4-amino-4-deoxy-L-arabinose-phosphoundecaprenol flippase subunit ArnE (111 aa).

Transmembrane regions (helical) follow at residues 36–56, 61–81, and 88–108; these read IVLWLGLALACIGLAMMLWLL, VPVGIAYPMLSLNFVWVTLAA, and PVSPRHWCGVAFIIGGIVILG. The EamA domain occupies 40-109; it reads LGLALACIGL…IIGGIVILGS (70 aa).

Belongs to the ArnE family. As to quaternary structure, heterodimer of ArnE and ArnF.

It localises to the cell inner membrane. The protein operates within bacterial outer membrane biogenesis; lipopolysaccharide biosynthesis. In terms of biological role, translocates 4-amino-4-deoxy-L-arabinose-phosphoundecaprenol (alpha-L-Ara4N-phosphoundecaprenol) from the cytoplasmic to the periplasmic side of the inner membrane. The protein is Probable 4-amino-4-deoxy-L-arabinose-phosphoundecaprenol flippase subunit ArnE of Shigella flexneri serotype 5b (strain 8401).